The sequence spans 260 residues: ATP synthase subunit a (260 aa).

The next 7 helical transmembrane spans lie at 30-50 (IAFTNSALWMAITTAVLIVFV), 96-116 (LFAFILFANMLGLLPLALVGV), 125-145 (FTVTGVLAIMSFAIVLGVGFA), 151-171 (FFSLFVPHGTPVPMIPIIFPI), 187-207 (LFVAMMAGHVLLEVLSGFVIS), 213-233 (VGTFFLAAVPSFLLMIGICAL), and 234-254 (ELLVAGIQAYVFALLTCVYLN).

The protein belongs to the ATPase A chain family. As to quaternary structure, F-type ATPases have 2 components, CF(1) - the catalytic core - and CF(0) - the membrane proton channel. CF(1) has five subunits: alpha(3), beta(3), gamma(1), delta(1), epsilon(1). CF(0) has three main subunits: a(1), b(2) and c(9-12). The alpha and beta chains form an alternating ring which encloses part of the gamma chain. CF(1) is attached to CF(0) by a central stalk formed by the gamma and epsilon chains, while a peripheral stalk is formed by the delta and b chains.

It is found in the cell inner membrane. Functionally, key component of the proton channel; it plays a direct role in the translocation of protons across the membrane. The polypeptide is ATP synthase subunit a (Novosphingobium aromaticivorans (strain ATCC 700278 / DSM 12444 / CCUG 56034 / CIP 105152 / NBRC 16084 / F199)).